The sequence spans 64 residues: Large ribosomal subunit protein bL35 (64 aa).

Basic residues predominate over residues 1 to 26 (MPKMKTKSAAAKRFKTTKSGKIKRKQ). Positions 1–46 (MPKMKTKSAAAKRFKTTKSGKIKRKQAYTSHLAPNKTTKQKRHLRK) are disordered.

The protein belongs to the bacterial ribosomal protein bL35 family.

The protein is Large ribosomal subunit protein bL35 of Mycoplasmoides gallisepticum (strain R(low / passage 15 / clone 2)) (Mycoplasma gallisepticum).